Here is a 455-residue protein sequence, read N- to C-terminus: Exodeoxyribonuclease 7 large subunit (455 aa).

This sequence belongs to the XseA family. In terms of assembly, heterooligomer composed of large and small subunits.

The protein resides in the cytoplasm. It carries out the reaction Exonucleolytic cleavage in either 5'- to 3'- or 3'- to 5'-direction to yield nucleoside 5'-phosphates.. Bidirectionally degrades single-stranded DNA into large acid-insoluble oligonucleotides, which are then degraded further into small acid-soluble oligonucleotides. In Koribacter versatilis (strain Ellin345), this protein is Exodeoxyribonuclease 7 large subunit.